Consider the following 723-residue polypeptide: Nucleolar protein 11 (723 aa).

The protein resides in the nucleus. The protein localises to the nucleolus. Ribosome biogenesis factor. May be required for both optimal rDNA transcription and pre-rRNA processing. The protein is Nucleolar protein 11 (NOL11) of Gallus gallus (Chicken).